Consider the following 358-residue polypeptide: MSQAVKVERRETLKQKPNTSQLGFGKYFTDYMLSYDYDADKGWHDLKIVPYGPIEISPAAQGVHYGQSVFEGLKAYKRDGEVALFRPEENFKRLNNSLARLEMPQVDEAELLEGLKQLVDIERDWIPEGEGQSLYIRPFVFATEGALGVGASHQYKLLIILSPSGAYYGGETLKPTKIYVEDEYVRAVRGGVGFAKVAGNYAASLLAQTNANKLGYDQVLWLDGVEQKYIEEVGSMNIFFVENGKVITPELNGSILPGITRKSIIELAKNLGYEVEERRVSIDELFESYDKGELTEVFGSGTAAVISPVGTLRYEDREIVINNNETGEITQKLYDVYTGIQNGTLEDKNGWRVVVPKY.

At Lys-196 the chain carries N6-(pyridoxal phosphate)lysine.

The protein belongs to the class-IV pyridoxal-phosphate-dependent aminotransferase family. Pyridoxal 5'-phosphate is required as a cofactor.

The catalysed reaction is L-leucine + 2-oxoglutarate = 4-methyl-2-oxopentanoate + L-glutamate. The enzyme catalyses L-isoleucine + 2-oxoglutarate = (S)-3-methyl-2-oxopentanoate + L-glutamate. It catalyses the reaction L-valine + 2-oxoglutarate = 3-methyl-2-oxobutanoate + L-glutamate. The protein operates within amino-acid biosynthesis; L-isoleucine biosynthesis; L-isoleucine from 2-oxobutanoate: step 4/4. Its pathway is amino-acid biosynthesis; L-leucine biosynthesis; L-leucine from 3-methyl-2-oxobutanoate: step 4/4. It functions in the pathway amino-acid biosynthesis; L-valine biosynthesis; L-valine from pyruvate: step 4/4. Acts on leucine, isoleucine and valine. The chain is Probable branched-chain-amino-acid aminotransferase (ilvE) from Staphylococcus aureus (strain N315).